The chain runs to 306 residues: GTPase Era (306 aa).

An Era-type G domain is found at 14 to 181 (KSGFIGIIGR…LDELWKYLPE (168 aa)). The interval 22 to 29 (GRPNVGKS) is G1. 22 to 29 (GRPNVGKS) contacts GTP. Residues 48-52 (QTTRN) form a G2 region. A G3 region spans residues 69–72 (DTPG). Residues 69-73 (DTPGI) and 131-134 (NKID) contribute to the GTP site. The segment at 131–134 (NKID) is G4. A G5 region spans residues 160–162 (ISA). The region spanning 212–290 (THKEIPYSSA…FLELFVRVRK (79 aa)) is the KH type-2 domain.

It belongs to the TRAFAC class TrmE-Era-EngA-EngB-Septin-like GTPase superfamily. Era GTPase family. Monomer.

The protein localises to the cytoplasm. The protein resides in the cell inner membrane. In terms of biological role, an essential GTPase that binds both GDP and GTP, with rapid nucleotide exchange. Plays a role in 16S rRNA processing and 30S ribosomal subunit biogenesis and possibly also in cell cycle regulation and energy metabolism. The protein is GTPase Era of Syntrophus aciditrophicus (strain SB).